The primary structure comprises 200 residues: Large ribosomal subunit protein uL4 (200 aa).

Positions Ala-44–Gly-70 are disordered.

It belongs to the universal ribosomal protein uL4 family. As to quaternary structure, part of the 50S ribosomal subunit.

One of the primary rRNA binding proteins, this protein initially binds near the 5'-end of the 23S rRNA. It is important during the early stages of 50S assembly. It makes multiple contacts with different domains of the 23S rRNA in the assembled 50S subunit and ribosome. Functionally, protein L4 is a both a transcriptional repressor and a translational repressor protein. It regulates transcription of the S10 operon (to which L4 belongs) by causing premature termination of transcription within the S10 leader. L4 controls the translation of the S10 operon by binding to its mRNA. Its function is as follows. This protein when expressed in E.coli represses both transcription and translation of the endogenous S10 operon. As the M.morganii S10 leader can be regulated in vitro by the E.coli L4 protein this strongly suggests the endogenous protein controls its own S10 operon in a similar fashion. In terms of biological role, forms part of the polypeptide exit tunnel. This is Large ribosomal subunit protein uL4 (rplD) from Morganella morganii (Proteus morganii).